A 154-amino-acid chain; its full sequence is Style cell-cycle inhibitor 1-A (154 aa).

2 stretches are compositionally biased toward basic and acidic residues: residues 1–11 (MGSDKKTPEEK) and 24–48 (DEVKSKRQNIKGDEERRKEKKDKSK). Positions 1–84 (MGSDKKTPEE…DKSKNKFEEL (84 aa)) are disordered. The segment covering 63-77 (GEKHKTKSHKHKDKS) has biased composition (basic residues).

Specifically expressed in flowers pistils, especially in stigmas and styles. Barely detected in roots, stems, leaves, sepals, petals and stamen.

The protein resides in the nucleus. Component of the auxin signaling transduction pathway that regulates cell proliferation and differentiation during flowers stigmas and styles development. Involved in the regulation of auxin-related genes. This is Style cell-cycle inhibitor 1-A from Nicotiana tabacum (Common tobacco).